The chain runs to 447 residues: MIKIKKGLNLPIAGRPEQVIYDGPAITEVALLGEEYVGMRPSMKIKEGEAVKKGQVLFEDKKNPGVVFTAPASGKIAAIHRGEKRVLQSVVIAVEGNDEIEFERYVPEALAKLSSEKVRRNLIQSGLWTALRTRPFSKIPAVDAEPFAIFVNAMDTNPLAADPTVIIKEAAEDFKRGLLVLSRLTERKIHVCKAAGADVPSENAANIETHEFGGPHPAGLSGTHIHFIEPVGANKTVWTINYQDVIAIGRLFVTGRLNTERVVALGGLQVNKPRLLRTVLGAKVSQLTAGELVDADNRVISGSVLNGAIAQGAHDYLGRYHNQISVIEEGRSKELFGWVAPQPDKYSITRTTLGHFLKNKLFKFTTAVNGGDRAMVPIGTYERVMPLDILPTLLLRDLIVGDTDSAQALGCLELDEEDLALCSFVCPGKYEYGPLLRKVLETIEKEG.

Belongs to the NqrA family. As to quaternary structure, composed of six subunits; NqrA, NqrB, NqrC, NqrD, NqrE and NqrF.

The enzyme catalyses a ubiquinone + n Na(+)(in) + NADH + H(+) = a ubiquinol + n Na(+)(out) + NAD(+). NQR complex catalyzes the reduction of ubiquinone-1 to ubiquinol by two successive reactions, coupled with the transport of Na(+) ions from the cytoplasm to the periplasm. NqrA to NqrE are probably involved in the second step, the conversion of ubisemiquinone to ubiquinol. This chain is Na(+)-translocating NADH-quinone reductase subunit A, found in Neisseria gonorrhoeae (strain ATCC 700825 / FA 1090).